The following is a 457-amino-acid chain: Serine--tRNA ligase (457 aa).

Residue 252–254 coordinates L-serine; that stretch reads TAE. Residues 283-285 and Val299 each bind ATP; that span reads RKE. Residue Glu306 participates in L-serine binding. 370 to 373 contributes to the ATP binding site; sequence EMVS. Residue Thr406 coordinates L-serine.

The protein belongs to the class-II aminoacyl-tRNA synthetase family. Type-1 seryl-tRNA synthetase subfamily. In terms of assembly, homodimer. The tRNA molecule binds across the dimer.

Its subcellular location is the cytoplasm. The enzyme catalyses tRNA(Ser) + L-serine + ATP = L-seryl-tRNA(Ser) + AMP + diphosphate + H(+). It carries out the reaction tRNA(Sec) + L-serine + ATP = L-seryl-tRNA(Sec) + AMP + diphosphate + H(+). It participates in aminoacyl-tRNA biosynthesis; selenocysteinyl-tRNA(Sec) biosynthesis; L-seryl-tRNA(Sec) from L-serine and tRNA(Sec): step 1/1. In terms of biological role, catalyzes the attachment of serine to tRNA(Ser). Is also able to aminoacylate tRNA(Sec) with serine, to form the misacylated tRNA L-seryl-tRNA(Sec), which will be further converted into selenocysteinyl-tRNA(Sec). The protein is Serine--tRNA ligase of Saccharolobus solfataricus (strain ATCC 35092 / DSM 1617 / JCM 11322 / P2) (Sulfolobus solfataricus).